The following is a 367-amino-acid chain: Phosphoribosylaminoimidazole-succinocarboxamide synthase (367 aa).

Belongs to the SAICAR synthetase family.

It catalyses the reaction 5-amino-1-(5-phospho-D-ribosyl)imidazole-4-carboxylate + L-aspartate + ATP = (2S)-2-[5-amino-1-(5-phospho-beta-D-ribosyl)imidazole-4-carboxamido]succinate + ADP + phosphate + 2 H(+). The protein operates within purine metabolism; IMP biosynthesis via de novo pathway; 5-amino-1-(5-phospho-D-ribosyl)imidazole-4-carboxamide from 5-amino-1-(5-phospho-D-ribosyl)imidazole-4-carboxylate: step 1/2. The polypeptide is Phosphoribosylaminoimidazole-succinocarboxamide synthase (Shewanella pealeana (strain ATCC 700345 / ANG-SQ1)).